The chain runs to 559 residues: Glucose-6-phosphate isomerase (559 aa).

E352 functions as the Proton donor in the catalytic mechanism. Residues H383 and K511 contribute to the active site.

The protein belongs to the GPI family.

It is found in the cytoplasm. The catalysed reaction is alpha-D-glucose 6-phosphate = beta-D-fructose 6-phosphate. It participates in carbohydrate biosynthesis; gluconeogenesis. It functions in the pathway carbohydrate degradation; glycolysis; D-glyceraldehyde 3-phosphate and glycerone phosphate from D-glucose: step 2/4. Catalyzes the reversible isomerization of glucose-6-phosphate to fructose-6-phosphate. The sequence is that of Glucose-6-phosphate isomerase from Chlorobium phaeobacteroides (strain DSM 266 / SMG 266 / 2430).